Reading from the N-terminus, the 228-residue chain is Urease accessory protein UreG (228 aa).

GTP is bound at residue 34–41 (GPVGSGKT).

The protein belongs to the SIMIBI class G3E GTPase family. UreG subfamily. In terms of assembly, homodimer. UreD, UreF and UreG form a complex that acts as a GTP-hydrolysis-dependent molecular chaperone, activating the urease apoprotein by helping to assemble the nickel containing metallocenter of UreC. The UreE protein probably delivers the nickel.

The protein localises to the cytoplasm. Its function is as follows. Facilitates the functional incorporation of the urease nickel metallocenter. This process requires GTP hydrolysis, probably effectuated by UreG. This Rhodococcus opacus (strain B4) protein is Urease accessory protein UreG.